Consider the following 514-residue polypeptide: Transcription termination factor Rho (514 aa).

A disordered region spans residues 25–52 (EPSSTPGPARNARRSNRRMRHPDKDVDK). The segment covering 35-45 (NARRSNRRMRH) has biased composition (basic residues). A Rho RNA-BD domain is found at 141-216 (LMYGEGTLEI…LRIEAINHAD (76 aa)). Residues 259 to 264 (GFGQRG), 271 to 276 (RAGKTM), and arginine 302 contribute to the ATP site.

It belongs to the Rho family. Homohexamer. The homohexamer assembles into an open ring structure.

In terms of biological role, facilitates transcription termination by a mechanism that involves Rho binding to the nascent RNA, activation of Rho's RNA-dependent ATPase activity, and release of the mRNA from the DNA template. In Rhodopirellula baltica (strain DSM 10527 / NCIMB 13988 / SH1), this protein is Transcription termination factor Rho.